Reading from the N-terminus, the 958-residue chain is Protein translocase subunit SecA (958 aa).

Residues Gln86, 104–108 (GEGKT), and Asp494 each bind ATP. Disordered stretches follow at residues 863 to 883 (AAATGESAPAEPETDDEAEKT) and 902 to 937 (QPISHAEGKVPANKRPKSEELHSPWADGRTFPGTGK). Cys941, Cys943, Cys952, and His953 together coordinate Zn(2+).

It belongs to the SecA family. In terms of assembly, monomer and homodimer. Part of the essential Sec protein translocation apparatus which comprises SecA, SecYEG and auxiliary proteins SecDF. Other proteins may also be involved. Zn(2+) serves as cofactor.

It localises to the cell membrane. The protein resides in the cytoplasm. It catalyses the reaction ATP + H2O + cellular proteinSide 1 = ADP + phosphate + cellular proteinSide 2.. In terms of biological role, part of the Sec protein translocase complex. Interacts with the SecYEG preprotein conducting channel. Has a central role in coupling the hydrolysis of ATP to the transfer of proteins into and across the cell membrane, serving as an ATP-driven molecular motor driving the stepwise translocation of polypeptide chains across the membrane. The protein is Protein translocase subunit SecA of Bifidobacterium adolescentis (strain ATCC 15703 / DSM 20083 / NCTC 11814 / E194a).